Reading from the N-terminus, the 424-residue chain is Probable serine/threonine-protein kinase PBL6 (424 aa).

Residues Met1 to Pro26 form a disordered region. Gly2 carries N-myristoyl glycine lipidation. A lipid anchor (S-palmitoyl cysteine) is attached at Cys3. Phosphothreonine is present on Thr87. A Protein kinase domain is found at Phe98 to Ser377. ATP is bound by residues Leu104–Val112 and Lys127. Position 172 is a phosphotyrosine (Tyr172). Asp225 (proton acceptor) is an active-site residue. Phosphoserine is present on residues Ser229 and Ser259. A phosphothreonine mark is found at Thr260 and Thr265. A Phosphotyrosine modification is found at Tyr273.

This sequence belongs to the protein kinase superfamily. Ser/Thr protein kinase family.

The protein resides in the cell membrane. The catalysed reaction is L-seryl-[protein] + ATP = O-phospho-L-seryl-[protein] + ADP + H(+). It catalyses the reaction L-threonyl-[protein] + ATP = O-phospho-L-threonyl-[protein] + ADP + H(+). Functionally, may be involved in plant defense signaling. This chain is Probable serine/threonine-protein kinase PBL6, found in Arabidopsis thaliana (Mouse-ear cress).